Reading from the N-terminus, the 303-residue chain is Archaeosortase A (303 aa).

The next 7 helical transmembrane spans lie at 3–23, 36–56, 60–80, 93–113, 169–189, 200–220, and 259–279; these read GLLS…GAVA, TAAW…FTLV, YIEG…GWLL, AVAA…FTLL, VVLA…IAAV, LAIA…FIAI, and LAVV…PELL. Cysteine 173 acts as the Acyl-thioester intermediate in catalysis. The active-site Proton donor is the arginine 214.

Belongs to the exosortase/archaeosortase family. Archaeosortase A subfamily.

The protein resides in the cell membrane. Functionally, transpeptidase that recognizes and modifies its substrate by proteolytic cleavage of a sorting signal. Following cleavage, a covalent intermediate is formed via a thioester bond between the archaeosortase and its substrate, which is then transferred and covalently attached to the cell membrane. This sortase recognizes a tripartite structure consisting of a conserved Pro-Gly-Phe (PGF) motif, followed by a transmembrane alpha helix domain and a cluster of basic residues, usually at the C-terminus of target proteins. Confirmed substrates include the cell surface S-layer glycoprotein Csg and HVO_0405. ArtA is required for the C-terminal processing of Csg and for its lipidation and attachment to the archaeal plasma membrane. It is also required for the processing of HVO_0405, which contains an atypical central tripartite structure. The protein is Archaeosortase A of Haloferax volcanii (strain ATCC 29605 / DSM 3757 / JCM 8879 / NBRC 14742 / NCIMB 2012 / VKM B-1768 / DS2) (Halobacterium volcanii).